The sequence spans 81 residues: High-potential iron-sulfur protein (81 aa).

[4Fe-4S] cluster-binding residues include cysteine 43, cysteine 46, cysteine 59, and cysteine 73.

It belongs to the high-potential iron-sulfur protein (HiPIP) family. Homodimer.

It localises to the periplasm. Functionally, specific class of high-redox-potential 4Fe-4S ferredoxins. Functions in anaerobic electron transport in most purple and in some other photosynthetic bacteria and in at least one genus (Paracoccus) of halophilic, denitrifying bacteria. This chain is High-potential iron-sulfur protein, found in Halochromatium salexigens (Chromatium salexigens).